Reading from the N-terminus, the 325-residue chain is MITDRQLSILNAIVEDYVDFGQPVGSKTLIERHNLNVSPATIRNEMKQLEDLNYIEKTHSSSGRSPSQLGFRYYVNRLLEQTSHQKTNKLRRLNQLLVENQYDVSSALTYFADELSNISQYTTLVVHPNHKQDIINNVHLIRANPNLVIMVIVFSSGHVEHVHLASDIPFSNDKLNTISNFVTNKLTEFNQNLQDDIVSFVQSEQEEIFINKLLNTMNNHISNQSNSIYMGGKVKLIDALNESNVSSIQPILQYIESNRIAELLQDISSPNINVKIGNEIDDSLSDISIVTSQYHFDETLKGQIAVIGPTAMHYQNVIQLLNRIW.

This sequence belongs to the HrcA family.

Functionally, negative regulator of class I heat shock genes (grpE-dnaK-dnaJ and groELS operons). Prevents heat-shock induction of these operons. The sequence is that of Heat-inducible transcription repressor HrcA from Staphylococcus aureus (strain MRSA252).